Here is a 307-residue protein sequence, read N- to C-terminus: Mitochondrial glycine transporter YMC1 (307 aa).

Solcar repeat units lie at residues 26-106 (VKDL…MKRF), 121-204 (PQYY…LIAN), and 218-305 (PAWK…AMRL). Transmembrane regions (helical) follow at residues 29–49 (LLAGTAGGIAQVLVGQPFDTT), 83–103 (LTPLIGVGACVSLQFGVNEAM), 118–138 (LSLPQYYACGVTGGIVNSFLA), 183–203 (TILREGHGCGTYFLVYEALIA), 223–243 (CIFGALSGTALWLMVYPLDVI), and 277–298 (FFKGFGPTMLRAAPANGATFAT).

It belongs to the mitochondrial carrier (TC 2.A.29) family.

The protein localises to the mitochondrion inner membrane. In terms of biological role, secondary mitochondrial glycine transporter required for the biosynthesis of heme at high glycine concentrations. Imports the precursor glycine into the mitochondrial matrix, where it is condensed with succinyl-CoA to produce 5-aminolevulinate (ALA), the first step of heme biosynthesis. This is Mitochondrial glycine transporter YMC1 from Saccharomyces cerevisiae (strain ATCC 204508 / S288c) (Baker's yeast).